Reading from the N-terminus, the 239-residue chain is Large ribosomal subunit protein uL1 (239 aa).

It belongs to the universal ribosomal protein uL1 family. As to quaternary structure, part of the 50S ribosomal subunit.

Functionally, binds directly to 23S rRNA. The L1 stalk is quite mobile in the ribosome, and is involved in E site tRNA release. In terms of biological role, protein L1 is also a translational repressor protein, it controls the translation of the L11 operon by binding to its mRNA. This is Large ribosomal subunit protein uL1 from Rickettsia rickettsii (strain Iowa).